The primary structure comprises 553 residues: General alpha-glucoside permease (553 aa).

The span at 1–21 shows a compositional bias: polar residues; it reads MSVDENQLENGQLLSSENEAS. Residues 1–26 form a disordered region; that stretch reads MSVDENQLENGQLLSSENEASSPFKE. At 1 to 33 the chain is on the cytoplasmic side; sequence MSVDENQLENGQLLSSENEASSPFKESIPSRSS. A helical transmembrane segment spans residues 34-54; the sequence is LYLIALTVSLLGVQLTWSVEL. Topologically, residues 55 to 72 are extracellular; that stretch reads GYGTPYLFSLGLRKEWTS. The helical transmembrane segment at 73-93 threads the bilayer; the sequence is IIWIAGPLTGILIQPIAGILS. At 94–111 the chain is on the cytoplasmic side; that stretch reads DRVNSRIGRRRPFMLCAS. The helical transmembrane segment at 112 to 132 threads the bilayer; sequence LLGTFSLFLMGWAPDICLFIF. Residues 133–140 lie on the Extracellular side of the membrane; sequence SNEVLMKR. A helical transmembrane segment spans residues 141–161; it reads VTIVLATISIYLLDVAVNVVM. Residues 162–186 are Cytoplasmic-facing; that stretch reads ASTRSLIVDSVRSDQQHEANSWAGR. A helical membrane pass occupies residues 187–207; sequence MIGVGNVLGYLLGYLPLYRIF. Residues 208–216 lie on the Extracellular side of the membrane; that stretch reads SFLNFTQLQ. Residues 217-237 form a helical membrane-spanning segment; that stretch reads VFCVLASISLVLTVTITTIFV. The Cytoplasmic segment spans residues 238 to 280; sequence SERRFPPVEHEKSVAGEIFEFFTTMRQSITALPFTLKRICFVQ. Residues 281 to 301 traverse the membrane as a helical segment; sequence FFAYFGWFPFLFYITTYVGIL. Over 302–322 the chain is Extracellular; the sequence is YLRHAPKGHEEDWDMATRQGS. The helical transmembrane segment at 323–343 threads the bilayer; sequence FALLLFAIISLAANTALPLLL. At 344 to 424 the chain is on the cytoplasmic side; that stretch reads EDTEDDEEDE…SKVQIKGLTL (81 aa). Residues 368–399 are disordered; sequence NDLGNIRTGTNTPRLGNLSETTSFRSENEPSR. Polar residues predominate over residues 374–392; it reads RTGTNTPRLGNLSETTSFR. A helical transmembrane segment spans residues 425–445; the sequence is PILWLSSHVLFGVCMLSTIFL. Residues 446–452 lie on the Extracellular side of the membrane; that stretch reads QTSWQAQ. The helical transmembrane segment at 453–473 threads the bilayer; the sequence is AMVAICGLSWACTLWIPYSLF. The Cytoplasmic portion of the chain corresponds to 474–494; sequence SSEIGKLGLRESSGKMIGVHN. Residues 495–515 traverse the membrane as a helical segment; sequence VFISAPQVLSTIIATIVFIQS. Residues 516-521 are Extracellular-facing; sequence EGSHRD. A helical transmembrane segment spans residues 522 to 542; sequence IADNSIAWVLRIGGISAFLAA. Residues 543-553 are Cytoplasmic-facing; that stretch reads YQCRHLLPINF.

It belongs to the glycoside-pentoside-hexuronide (GPH) cation symporter transporter (TC 2.A.2.4) family.

Its subcellular location is the membrane. Responsible for the transport of maltose and sucrose into the cell, with the concomitant uptake of protons (symport system). The polypeptide is General alpha-glucoside permease (sut1) (Schizosaccharomyces pombe (strain 972 / ATCC 24843) (Fission yeast)).